The primary structure comprises 626 residues: DNA primase (626 aa).

The CHC2-type zinc-finger motif lies at 39–63 (CPFHGEKTPSFSVSPEKQIFHCFGC). The region spanning 264–346 (EEITLMEGFM…DVFVLQLPAG (83 aa)) is the Toprim domain. Positions 270, 314, and 316 each coordinate Mg(2+).

It belongs to the DnaG primase family. Monomer. Interacts with DnaB. The cofactor is Zn(2+). Mg(2+) serves as cofactor.

The enzyme catalyses ssDNA + n NTP = ssDNA/pppN(pN)n-1 hybrid + (n-1) diphosphate.. Its function is as follows. RNA polymerase that catalyzes the synthesis of short RNA molecules used as primers for DNA polymerase during DNA replication. The polypeptide is DNA primase (Listeria innocua serovar 6a (strain ATCC BAA-680 / CLIP 11262)).